Reading from the N-terminus, the 239-residue chain is Orotidine 5'-phosphate decarboxylase (239 aa).

Substrate is bound by residues Asp-11, Lys-33, 60–69 (DLKFHDIPTT), Thr-117, Arg-178, Gln-187, Gly-207, and Arg-208. Lys-62 functions as the Proton donor in the catalytic mechanism.

This sequence belongs to the OMP decarboxylase family. Type 1 subfamily. As to quaternary structure, homodimer.

It catalyses the reaction orotidine 5'-phosphate + H(+) = UMP + CO2. The protein operates within pyrimidine metabolism; UMP biosynthesis via de novo pathway; UMP from orotate: step 2/2. Its function is as follows. Catalyzes the decarboxylation of orotidine 5'-monophosphate (OMP) to uridine 5'-monophosphate (UMP). The sequence is that of Orotidine 5'-phosphate decarboxylase from Nitrosospira multiformis (strain ATCC 25196 / NCIMB 11849 / C 71).